The chain runs to 78 residues: UPF0349 protein Sca_0544 (78 aa).

This sequence belongs to the UPF0349 family.

The polypeptide is UPF0349 protein Sca_0544 (Staphylococcus carnosus (strain TM300)).